A 975-amino-acid chain; its full sequence is Macrophage colony-stimulating factor 1 receptor 1 (975 aa).

A signal peptide spans Met-1–Ser-17. The Extracellular segment spans residues Val-18 to Ser-519. 5 consecutive Ig-like C2-type domains span residues Ser-34–Lys-113, Ser-125–Ile-208, Met-221–Val-310, Gly-329–Lys-407, and Phe-404–Ser-513. Disulfide bonds link Cys-49–Cys-93, Cys-140–Cys-189, and Cys-236–Cys-292. Residues Asn-156, Asn-165, Asn-246, Asn-250, Asn-289, Asn-301, Asn-399, Asn-420, and Asn-451 are each glycosylated (N-linked (GlcNAc...) asparagine). A disulfide bridge connects residues Cys-426 and Cys-495. The chain crosses the membrane as a helical span at residues Thr-520–Tyr-540. The Cytoplasmic segment spans residues Lys-541–Cys-975. The interval Gln-544–Lys-576 is regulatory juxtamembrane domain. Phosphotyrosine; by autocatalysis is present on Tyr-563. Residues Leu-584 to Leu-918 form the Protein kinase domain. ATP-binding positions include Leu-590–Val-598 and Lys-619. Tyr-702 and Tyr-726 each carry phosphotyrosine; by autocatalysis. The active-site Proton acceptor is the Asp-782. Residues Asp-800–Pro-822 form an activation loop region. Residues Tyr-813 and Tyr-929 each carry the phosphotyrosine; by autocatalysis modification. Residues Glu-939–Glu-963 are disordered. Residues Asp-944–Asp-958 show a composition bias toward basic and acidic residues. Tyr-972 carries the post-translational modification Phosphotyrosine; by autocatalysis.

It belongs to the protein kinase superfamily. Tyr protein kinase family. CSF-1/PDGF receptor subfamily. In terms of assembly, monomer. Homodimer. Interacts with CSF1. In terms of processing, autophosphorylated in response to CSF1 binding. autophosphorylation, leading to its degradation. Post-translationally, ubiquitinated. Becomes rapidly polyubiquitinated after autophosphorylation, leading to its degradation.

The protein resides in the cell membrane. The enzyme catalyses L-tyrosyl-[protein] + ATP = O-phospho-L-tyrosyl-[protein] + ADP + H(+). Its activity is regulated as follows. Present in an inactive conformation in the absence of bound ligand. CSF1 binding leads to dimerization and activation by autophosphorylation on tyrosine residues. Functionally, tyrosine-protein kinase that acts as a cell-surface receptor for CSF1 and plays an essential role in the regulation of survival, proliferation and differentiation of hematopoietic precursor cells, especially mononuclear phagocytes, such as macrophages and monocytes. Plays an important role in innate immunity and in inflammatory processes. Plays an important role in the regulation of osteoclast proliferation and differentiation, the regulation of bone resorption, and is required for normal bone development. Promotes reorganization of the actin cytoskeleton, regulates formation of membrane ruffles, cell adhesion and cell migration. Activates several signaling pathways in response to ligand binding. The chain is Macrophage colony-stimulating factor 1 receptor 1 (csf1r1) from Takifugu rubripes (Japanese pufferfish).